We begin with the raw amino-acid sequence, 119 residues long: MHELSITEELLKTIVAKAEEAKARKISRINLVIGEYAGVVEDSVKMCFDILSQDTMAKGALLEFKRIPAEFRCRLCGHTFPSGQHALVCPKCQGWNAEVIAGNEFFIESIEVDDESQSS.

Histidine 2 is a Ni(2+) binding site. Zn(2+) is bound by residues cysteine 73, cysteine 76, cysteine 89, and cysteine 92.

It belongs to the HypA/HybF family.

Involved in the maturation of [NiFe] hydrogenases. Required for nickel insertion into the metal center of the hydrogenase. The chain is Hydrogenase maturation factor HypA from Dehalococcoides mccartyi (strain ATCC BAA-2266 / KCTC 15142 / 195) (Dehalococcoides ethenogenes (strain 195)).